The primary structure comprises 349 residues: N-acetyltaurine hydrolase (349 aa).

The a divalent metal cation site is built by His-26, His-28, Glu-169, His-201, His-230, and Asp-298.

The protein belongs to the metallo-dependent hydrolases superfamily. Phosphotriesterase family. It depends on a divalent metal cation as a cofactor. In terms of tissue distribution, expressed primarily in proximal tubules of the kidney.

The protein localises to the cytoplasm. It is found in the cytosol. The catalysed reaction is N-acetyltaurine + H2O = taurine + acetate. It carries out the reaction N-propanoyltaurine + H2O = propanoate + taurine. It catalyses the reaction N-acetyl-L-methionine + H2O = L-methionine + acetate. The enzyme catalyses N-acetyl-L-isoleucine + H2O = L-isoleucine + acetate. The catalysed reaction is N-acetyl-L-leucine + H2O = L-leucine + acetate. It carries out the reaction N-acetyl-L-valine + H2O = L-valine + acetate. In terms of biological role, N-acetyltaurine hydrolase that regulates feeding by catalyzing the hydrolysis of N-acetyltaurine into taurine and acetate. N-acetyltaurine has anorexigenic and anti-obesity effects that are dependent on GFRAL receptor and GDF15. PTER also acts on other N-acetyl amino acids (Met, Ile, Leu, Val) and N-propionyltaurine, but at lower rates. Binds resiniferotoxin, a vanilloid that desensitizes nociceptive neurons. This Rattus norvegicus (Rat) protein is N-acetyltaurine hydrolase.